The chain runs to 689 residues: MTHQTFLVEIGTEELPPKSLRSLVESFAFYLTQELNKAHLDHGEVTWFATPRRLAVKVACLSTIQKDQKIEKRGPAIAQAYDVDGNPTKAATAWARSCGISLDQAKSLVTDKGEWLLYSWVLPGKSASSLLAEKVKIALSQLPISKLMSWGIHEAKFVRPVHTVTLLLGDELISGIIFGVNSNRKILGHRFMGEPSFIIEHADQYPQILLEKGKVMADFFLRKTQIKTDIEKAAEKIGAIADISDNLLEEVTSLVEWPVVHTAQFEKKFLEVPSEALVHTMKNDQKYFPVYNKSGQLMPYFIFVANILSQDPPQLIFGNEKVIRPRFADAQFFFETDLKQSLEERLPSLKTILFQKELGTLYEKVQRVQALSGWIASQIGANVEYSIKAGLLSKSDLMTNMVCEFPETQGIMGMHYARYHHEPDEVARAIYEQYQPRFSGDNLPSTLVACSVAIADKMDTLTGIFGINQLPKGDKDPFGLRRAALGVLRIIVEKNLPLDLQTLISEAVRLYGNKLKNSNLIDQIIEFMLGRFRSWYQEAGHGIDSIQAVLARRPTKPADFNARIQAVTYFRTMNEARALCASNKRVSNILSQSLDIPKNSIDTGLLKEPAEIELAQNILELEKKLAPFFVAGLYKDALLELVALREPLDIFFKQVMVMVPDQDLRLNRLALLNKLRALFLRVADISFLQ.

It belongs to the class-II aminoacyl-tRNA synthetase family. Tetramer of two alpha and two beta subunits.

The protein resides in the cytoplasm. The enzyme catalyses tRNA(Gly) + glycine + ATP = glycyl-tRNA(Gly) + AMP + diphosphate. In Hamiltonella defensa subsp. Acyrthosiphon pisum (strain 5AT), this protein is Glycine--tRNA ligase beta subunit.